Reading from the N-terminus, the 79-residue chain is Small ribosomal subunit protein bS18 (79 aa).

This sequence belongs to the bacterial ribosomal protein bS18 family. In terms of assembly, part of the 30S ribosomal subunit. Forms a tight heterodimer with protein bS6.

In terms of biological role, binds as a heterodimer with protein bS6 to the central domain of the 16S rRNA, where it helps stabilize the platform of the 30S subunit. This Rhodopseudomonas palustris (strain BisB18) protein is Small ribosomal subunit protein bS18.